Consider the following 364-residue polypeptide: Long-wave-sensitive opsin 1 (364 aa).

Residues 1–52 (MTQRWGPQRLAGGQPHAGLEDSTRASIFTYTNSNATRGPFEGPNYHIAPRWV) are Extracellular-facing. A glycan (O-linked (GlcNAc) serine) is linked at serine 22. The N-linked (GlcNAc...) asparagine glycan is linked to asparagine 34. Residues 53-77 (YHVTSAWMIFVVIASVFTNGLVLAA) traverse the membrane as a helical segment. Over 78-89 (TMKFKKLRHPLN) the chain is Cytoplasmic. Residues 90 to 115 (WILVNLAVADLAETIIASTISVVNQI) form a helical membrane-spanning segment. Topologically, residues 116-129 (YGYFVLGHPMCVLE) are extracellular. A disulfide bridge connects residues cysteine 126 and cysteine 203. A helical membrane pass occupies residues 130 to 149 (GYTVSLCGITGLWSLAIISW). The Cytoplasmic segment spans residues 150 to 168 (ERWLVVCKPFGNVRFDAKL). Residues 169-192 (AIAGIAFSWIWAAVWTAPPIFGWS) traverse the membrane as a helical segment. The Extracellular portion of the chain corresponds to 193–218 (RYWPHGLKTSCGPDVFSGSSYPGVQS). The chain crosses the membrane as a helical span at residues 219–246 (YMIVLMITCCIIPLSVIVLCYLQVWLAI). The Cytoplasmic segment spans residues 247 to 268 (RAVAKQQKESESTQKAEKEVTR). The helical transmembrane segment at 269–292 (MVMVMIFAYCVCWGPYTFFACFAA) threads the bilayer. The Extracellular segment spans residues 293–300 (AHPGYAFH). A helical membrane pass occupies residues 301 to 325 (PLVAALPAYFAKSATIYNPIIYVFM). Lysine 312 is subject to N6-(retinylidene)lysine. The Cytoplasmic portion of the chain corresponds to 326–364 (NRQFRNCIMQLFGKKVDDGSELSSASRTEASSVSSVSPA).

This sequence belongs to the G-protein coupled receptor 1 family. Opsin subfamily. Phosphorylated on some or all of the serine and threonine residues present in the C-terminal region. The three color pigments are found in the cone photoreceptor cells. Expressed in retina.

The protein resides in the membrane. Visual pigments are the light-absorbing molecules that mediate vision. They consist of an apoprotein, opsin, covalently linked to cis-retinal. In Felis catus (Cat), this protein is Long-wave-sensitive opsin 1 (OPN1LW).